A 122-amino-acid chain; its full sequence is Alpha-amylase/trypsin inhibitor (122 aa).

Disulfide bonds link Cys6–Cys55, Cys20–Cys44, Cys29–Cys85, Cys45–Cys103, and Cys57–Cys114.

This sequence belongs to the protease inhibitor I6 (cereal trypsin/alpha-amylase inhibitor) family. In terms of tissue distribution, seeds.

It is found in the secreted. In terms of biological role, may play a protective role against endo- and exogenous hydrolytic activities in the Ragi seeds. In Eleusine coracana (Indian finger millet), this protein is Alpha-amylase/trypsin inhibitor.